The following is a 505-amino-acid chain: Maturase K (505 aa).

Belongs to the intron maturase 2 family. MatK subfamily.

It localises to the plastid. It is found in the chloroplast. Functionally, usually encoded in the trnK tRNA gene intron. Probably assists in splicing its own and other chloroplast group II introns. The polypeptide is Maturase K (Gomphrena pulchella (Globe amaranth)).